A 691-amino-acid chain; its full sequence is Elongation factor G (691 aa).

One can recognise a tr-type G domain in the interval 8-282; it reads ERVRNIGIAA…AVVDYLPAPV (275 aa). GTP-binding positions include 17-24, 81-85, and 135-138; these read AHIDAGKT, DTPGH, and NKMD.

This sequence belongs to the TRAFAC class translation factor GTPase superfamily. Classic translation factor GTPase family. EF-G/EF-2 subfamily.

Its subcellular location is the cytoplasm. Functionally, catalyzes the GTP-dependent ribosomal translocation step during translation elongation. During this step, the ribosome changes from the pre-translocational (PRE) to the post-translocational (POST) state as the newly formed A-site-bound peptidyl-tRNA and P-site-bound deacylated tRNA move to the P and E sites, respectively. Catalyzes the coordinated movement of the two tRNA molecules, the mRNA and conformational changes in the ribosome. The polypeptide is Elongation factor G (Prochlorococcus marinus (strain MIT 9303)).